Consider the following 127-residue polypeptide: Large ribosomal subunit protein bL17 (127 aa).

The protein belongs to the bacterial ribosomal protein bL17 family. In terms of assembly, part of the 50S ribosomal subunit. Contacts protein L32.

This is Large ribosomal subunit protein bL17 from Pediococcus pentosaceus (strain ATCC 25745 / CCUG 21536 / LMG 10740 / 183-1w).